Here is a 380-residue protein sequence, read N- to C-terminus: Cytochrome b (380 aa).

4 helical membrane passes run 34–54, 78–99, 114–134, and 179–199; these read FGSLLGICLMTQILTGLLLAM, WLIRNLHANGASFFFICIYLHI, WNTGILLLLTLMATAFVGYVL, and FFALHFLLPFMIAGLTLIHLT. Residues His-84 and His-98 each coordinate heme b. His-183 and His-197 together coordinate heme b. Residue His-202 coordinates a ubiquinone. The next 4 membrane-spanning stretches (helical) occupy residues 227–247, 289–309, 321–341, and 348–368; these read LKDILGFTLMFLPLTALALFS, LGGVLALAASVLVLFLSPLLH, LSQLLFWLLVTNLFILTWIGS, and FIIIGQLASITYFTILLVLFP.

It belongs to the cytochrome b family. In terms of assembly, the cytochrome bc1 complex contains 11 subunits: 3 respiratory subunits (MT-CYB, CYC1 and UQCRFS1), 2 core proteins (UQCRC1 and UQCRC2) and 6 low-molecular weight proteins (UQCRH/QCR6, UQCRB/QCR7, UQCRQ/QCR8, UQCR10/QCR9, UQCR11/QCR10 and a cleavage product of UQCRFS1). This cytochrome bc1 complex then forms a dimer. Requires heme b as cofactor.

It localises to the mitochondrion inner membrane. Its function is as follows. Component of the ubiquinol-cytochrome c reductase complex (complex III or cytochrome b-c1 complex) that is part of the mitochondrial respiratory chain. The b-c1 complex mediates electron transfer from ubiquinol to cytochrome c. Contributes to the generation of a proton gradient across the mitochondrial membrane that is then used for ATP synthesis. The chain is Cytochrome b (MT-CYB) from Thalassarche impavida (Albatross).